We begin with the raw amino-acid sequence, 312 residues long: Ribosomal RNA small subunit methyltransferase H (312 aa).

S-adenosyl-L-methionine contacts are provided by residues 35–37 (GGH), Asp55, Phe79, Asp100, and Gln107.

The protein belongs to the methyltransferase superfamily. RsmH family.

Its subcellular location is the cytoplasm. It catalyses the reaction cytidine(1402) in 16S rRNA + S-adenosyl-L-methionine = N(4)-methylcytidine(1402) in 16S rRNA + S-adenosyl-L-homocysteine + H(+). Specifically methylates the N4 position of cytidine in position 1402 (C1402) of 16S rRNA. This Azoarcus sp. (strain BH72) protein is Ribosomal RNA small subunit methyltransferase H.